The following is a 241-amino-acid chain: Pyridoxine 5'-phosphate synthase (241 aa).

Asn-7 contributes to the 3-amino-2-oxopropyl phosphate binding site. 9–10 (DH) serves as a coordination point for 1-deoxy-D-xylulose 5-phosphate. Arg-18 contributes to the 3-amino-2-oxopropyl phosphate binding site. His-43 acts as the Proton acceptor in catalysis. 1-deoxy-D-xylulose 5-phosphate contacts are provided by Arg-45 and His-50. The active-site Proton acceptor is Glu-70. 1-deoxy-D-xylulose 5-phosphate is bound at residue Thr-100. The active-site Proton donor is His-191. 3-amino-2-oxopropyl phosphate is bound by residues Gly-192 and 213–214 (GH).

The protein belongs to the PNP synthase family. In terms of assembly, homooctamer; tetramer of dimers.

The protein resides in the cytoplasm. The catalysed reaction is 3-amino-2-oxopropyl phosphate + 1-deoxy-D-xylulose 5-phosphate = pyridoxine 5'-phosphate + phosphate + 2 H2O + H(+). The protein operates within cofactor biosynthesis; pyridoxine 5'-phosphate biosynthesis; pyridoxine 5'-phosphate from D-erythrose 4-phosphate: step 5/5. In terms of biological role, catalyzes the complicated ring closure reaction between the two acyclic compounds 1-deoxy-D-xylulose-5-phosphate (DXP) and 3-amino-2-oxopropyl phosphate (1-amino-acetone-3-phosphate or AAP) to form pyridoxine 5'-phosphate (PNP) and inorganic phosphate. The polypeptide is Pyridoxine 5'-phosphate synthase (Nitrosospira multiformis (strain ATCC 25196 / NCIMB 11849 / C 71)).